The sequence spans 594 residues: NADH-quinone oxidoreductase subunit C/D (594 aa).

Residues M1–Q185 are NADH dehydrogenase I subunit C. The tract at residues D209–R594 is NADH dehydrogenase I subunit D.

In the N-terminal section; belongs to the complex I 30 kDa subunit family. It in the C-terminal section; belongs to the complex I 49 kDa subunit family. NDH-1 is composed of 13 different subunits. Subunits NuoB, CD, E, F, and G constitute the peripheral sector of the complex.

Its subcellular location is the cell inner membrane. It carries out the reaction a quinone + NADH + 5 H(+)(in) = a quinol + NAD(+) + 4 H(+)(out). Functionally, NDH-1 shuttles electrons from NADH, via FMN and iron-sulfur (Fe-S) centers, to quinones in the respiratory chain. The immediate electron acceptor for the enzyme in this species is believed to be ubiquinone. Couples the redox reaction to proton translocation (for every two electrons transferred, four hydrogen ions are translocated across the cytoplasmic membrane), and thus conserves the redox energy in a proton gradient. The chain is NADH-quinone oxidoreductase subunit C/D from Pseudomonas fluorescens (strain SBW25).